The sequence spans 411 residues: Peptidase T (411 aa).

Histidine 79 serves as a coordination point for Zn(2+). Aspartate 81 is an active-site residue. Aspartate 142 contacts Zn(2+). Glutamate 176 (proton acceptor) is an active-site residue. Zn(2+)-binding residues include glutamate 177, aspartate 199, and histidine 381.

This sequence belongs to the peptidase M20B family. The cofactor is Zn(2+).

The protein resides in the cytoplasm. It carries out the reaction Release of the N-terminal residue from a tripeptide.. In terms of biological role, cleaves the N-terminal amino acid of tripeptides. The polypeptide is Peptidase T (Geobacillus thermodenitrificans (strain NG80-2)).